Here is a 425-residue protein sequence, read N- to C-terminus: Dipeptidase tcpJ (425 aa).

Zn(2+)-binding residues include H46, D48, and E158. Substrate contacts are provided by H185, R259, and D318.

The protein belongs to the metallo-dependent hydrolases superfamily. Peptidase M19 family. It depends on Zn(2+) as a cofactor.

The catalysed reaction is an L-aminoacyl-L-amino acid + H2O = 2 an L-alpha-amino acid. In terms of biological role, dipeptidase; part of the gene cluster that mediates the biosynthesis of an unusual class of epipolythiodioxopiperazines (ETPs) lacking the reactive thiol group important for toxicity. Firstly, L-tyrosine is prenylated by tcpD, before undergoing condensation with L-glycine in a reaction catalyzed by the NRPS tcpP leading to the diketopiperazine (DKP) backbone. Afterwards the alpha-carbon of tyrosine is oxidized by the cytochrome P450 tcpC to form a hydroxyl group. However, in contrast other ETP biosynthesis pathways studied so far, tcpC is not able to bishydroxylate the DKP at both alpha-carbon positions, but hydroxylates the alpha-carbon of the tyrosine part and the nitrogen of the glycine part. The next steps involve an alpha,beta-elimination reaction catalyzed by tcpI, a methylation by the methyltransferase tcpN the action of the four enzyme cascade tcpG/K/J/I. Due to a dysfunctional cytochrome P450 monooxygenase tcpC, the pathway leads to the biosynthesis of probable non-toxic metabolites lacking the reactive thiol group. This Claviceps purpurea (strain 20.1) (Ergot fungus) protein is Dipeptidase tcpJ.